A 274-amino-acid polypeptide reads, in one-letter code: Acetyl-coenzyme A carboxylase carboxyl transferase subunit alpha (274 aa).

Positions 1–245 (MENSQELTPW…RENLKKAIEG (245 aa)) constitute a CoA carboxyltransferase C-terminal domain.

Belongs to the AccA family. As to quaternary structure, acetyl-CoA carboxylase is a heterohexamer composed of biotin carboxyl carrier protein (AccB), biotin carboxylase (AccC) and two subunits each of ACCase subunit alpha (AccA) and ACCase subunit beta (AccD).

It localises to the cytoplasm. It catalyses the reaction N(6)-carboxybiotinyl-L-lysyl-[protein] + acetyl-CoA = N(6)-biotinyl-L-lysyl-[protein] + malonyl-CoA. The protein operates within lipid metabolism; malonyl-CoA biosynthesis; malonyl-CoA from acetyl-CoA: step 1/1. Functionally, component of the acetyl coenzyme A carboxylase (ACC) complex. First, biotin carboxylase catalyzes the carboxylation of biotin on its carrier protein (BCCP) and then the CO(2) group is transferred by the carboxyltransferase to acetyl-CoA to form malonyl-CoA. The sequence is that of Acetyl-coenzyme A carboxylase carboxyl transferase subunit alpha from Clostridium acetobutylicum (strain ATCC 824 / DSM 792 / JCM 1419 / IAM 19013 / LMG 5710 / NBRC 13948 / NRRL B-527 / VKM B-1787 / 2291 / W).